We begin with the raw amino-acid sequence, 823 residues long: Protein Jade-3 (823 aa).

The tract at residues 1-32 (MKRHRPVSSSDSSDESPSTSFTSGSMYRIKSK) is disordered. A compositionally biased stretch (low complexity) spans 8–25 (SSSDSSDESPSTSFTSGS). 2 positions are modified to N6-acetyllysine: Lys-30 and Lys-32. Ser-85 is modified (phosphoserine). The PHD-type 1 zinc finger occupies 200–250 (DVICDVCRSPDSEEGNDMVFCDKCNVCVHQACYGILKVPEGSWLCRSCVLG). Residues 252–286 (YPQCVLCPKKGGALKTTKTGTKWAHVSCALWIPEV) form a C2HC pre-PHD-type zinc finger. The segment at 310–366 (LVCNLCKLKTGACIQCSIKSCITAFHVTCAFEHGLEMKTILDEGDEVKFKSYCLKHS) adopts a PHD-type 2 zinc-finger fold. Disordered stretches follow at residues 372–395 (LGEA…KTSL) and 542–576 (KLKM…VHSI). Positions 561–575 (DQQPHSPDSSSSVHS) are enriched in low complexity. A Phosphoserine modification is found at Ser-566. Lys-601 carries the N6-acetyllysine modification. The residue at position 608 (Ser-608) is a Phosphoserine. The interval 609-630 (LSHSRSEAKESSPAWRTPSSEC) is disordered. At Lys-638 the chain carries N6-acetyllysine. Polar residues-rich tracts occupy residues 650–664 (SSIG…SKFA) and 673–684 (WSGNVTQKDSSS). Residues 650-684 (SSIGNGKSQPNSKFAKSNGLEGSWSGNVTQKDSSS) are disordered. Residue Lys-735 is modified to N6-acetyllysine. Positions 758 to 823 (RAPYQENDGY…HPLSHSSMQR (66 aa)) are disordered. Ser-774, Ser-776, and Ser-780 each carry phosphoserine. Residues 781–809 (DGNKEKVRVRKDSSDRENPPHDSRRDCHG) are compositionally biased toward basic and acidic residues.

Belongs to the JADE family. In terms of assembly, component of the HBO1 complex composed at least of ING4 or ING5, KAT7/HBO1, MEAF6, and one of JADE1, JADE2 and JADE3. As to expression, ubiquitously expressed, with highest levels in placenta and uterus.

Its function is as follows. Scaffold subunit of some HBO1 complexes, which have a histone H4 acetyltransferase activity. The chain is Protein Jade-3 (JADE3) from Homo sapiens (Human).